The chain runs to 1798 residues: Non-reducing polyketide synthase nscA (1798 aa).

The interval 25-256 (RRLDQHSKDR…PLPVYDGLCH (232 aa)) is N-terminal acylcarrier protein transacylase domain (SAT). The Ketosynthase family 3 (KS3) domain occupies 392-825 (SSKLAIVGMA…GGNTTLLLED (434 aa)). Catalysis depends on for beta-ketoacyl synthase activity residues cysteine 565, histidine 700, and histidine 743. The tract at residues 931–1224 (FTGQGAYYHG…LVRSMIPSAP (294 aa)) is malonyl-CoA:ACP transacylase (MAT) domain. The segment at 1322–1458 (HQITAETVRT…ATILFEDPGA (137 aa)) is N-terminal hotdog fold. A PKS/mFAS DH domain is found at 1322-1632 (HQITAETVRT…FRRVPRLLMD (311 aa)). Histidine 1354 serves as the catalytic Proton acceptor; for dehydratase activity. A product template (PT) domain region spans residues 1390 to 1628 (HMNLTDVEVL…GMIRFRRVPR (239 aa)). The C-terminal hotdog fold stretch occupies residues 1486-1632 (ASRLSKPLAY…FRRVPRLLMD (147 aa)). The active-site Proton donor; for dehydratase activity is aspartate 1543. The disordered stretch occupies residues 1695–1721 (LLATSSGDSTPKEPPIVTPAESERAGP). The region spanning 1721 to 1798 (PVDNNMISQC…EMTAWIEEYC (78 aa)) is the Carrier domain. Position 1758 is an O-(pantetheine 4'-phosphoryl)serine (serine 1758).

Pantetheine 4'-phosphate serves as cofactor.

The protein operates within secondary metabolite biosynthesis. Non-reducing polyketide synthase; part of the gene cluster that mediates the biosynthesis of neosartoricin B, a prenylated anthracenone that probably exhibits T-cell antiproliferative activity, suggestive of a physiological role as an immunosuppressive agent. The non-reducing polyketide synthase nscA probably synthesizes and cyclizes the decaketide backbone. The hydrolase nscB then mediates the product release through hydrolysis followed by spontaneous decarboxylation. The prenyltransferase nscD catalyzes the addition of the dimethylallyl group to the aromatic C5. The FAD-dependent monooxygenase nscC is then responsible for the stereospecific hydroxylation at C2. Neosartoricin B can be converted into two additional compounds neosartoricins C and D. Neosartoricin C is a spirocyclic compound that is cyclized through the attack of C3 hydroxyl on C14, followed by dehydration. On the other hand, neosartoricin D is a further cyclized compound in which attack of C2 on C14 in neosartoricin C results in the formation of the acetal-containing dioxabicyclo-octanone ring. Both of these compounds are novel and possibly represent related metabolites of the gene cluster. This chain is Non-reducing polyketide synthase nscA, found in Trichophyton rubrum (strain ATCC MYA-4607 / CBS 118892) (Athlete's foot fungus).